Consider the following 240-residue polypeptide: Transmembrane emp24 domain-containing protein 6 (240 aa).

The N-terminal stretch at 1–21 (MSPLLFGAGLVVLNLVTSARS) is a signal peptide. The Lumenal segment spans residues 22 to 200 (QKTEPLSGSG…FFLIQSNYNY (179 aa)). A GOLD domain is found at 53–138 (TECFWQFAHQ…SVQVYLNFGV (86 aa)). 2 N-linked (GlcNAc...) asparagine glycosylation sites follow: asparagine 107 and asparagine 156. A helical membrane pass occupies residues 201–223 (VNWWSTAQSLVIILSGILQLYFL). Residues 224–240 (KRLFNVPTTTDTKKPRC) are Cytoplasmic-facing.

This sequence belongs to the EMP24/GP25L family.

The protein localises to the endoplasmic reticulum membrane. This chain is Transmembrane emp24 domain-containing protein 6 (TMED6), found in Homo sapiens (Human).